The primary structure comprises 291 residues: Protease HtpX homolog (291 aa).

A run of 2 helical transmembrane segments spans residues 4–24 (IALF…VASL) and 38–58 (LGAL…ISLL). H144 provides a ligand contact to Zn(2+). E145 is a catalytic residue. Residue H148 participates in Zn(2+) binding. 2 helical membrane passes run 159–179 (LIQG…GYAV) and 199–219 (VTTI…VAWF). Residue E224 coordinates Zn(2+).

This sequence belongs to the peptidase M48B family. The cofactor is Zn(2+).

It is found in the cell inner membrane. This is Protease HtpX homolog from Paracidovorax citrulli (strain AAC00-1) (Acidovorax citrulli).